Consider the following 470-residue polypeptide: Aminodeoxychorismate synthase component 1 (470 aa).

This sequence belongs to the anthranilate synthase component I family. In terms of assembly, monomer. Heterodimer consisting of two non-identical subunits: a glutamine amidotransferase subunit (PabA) and a aminodeoxychorismate synthase subunit (PabB). Requires Mg(2+) as cofactor.

The catalysed reaction is chorismate + L-glutamine = 4-amino-4-deoxychorismate + L-glutamate. The protein operates within cofactor biosynthesis; tetrahydrofolate biosynthesis; 4-aminobenzoate from chorismate: step 1/2. Its function is as follows. Part of a heterodimeric complex that catalyzes the two-step biosynthesis of 4-amino-4-deoxychorismate (ADC), a precursor of p-aminobenzoate (PABA) and tetrahydrofolate. In the first step, a glutamine amidotransferase (PabA) generates ammonia as a substrate that, along with chorismate, is used in the second step, catalyzed by aminodeoxychorismate synthase (PabB) to produce ADC. This Bacillus subtilis (strain 168) protein is Aminodeoxychorismate synthase component 1 (pabB).